The following is a 194-amino-acid chain: Imidazoleglycerol-phosphate dehydratase (194 aa).

This sequence belongs to the imidazoleglycerol-phosphate dehydratase family.

It localises to the cytoplasm. The enzyme catalyses D-erythro-1-(imidazol-4-yl)glycerol 3-phosphate = 3-(imidazol-4-yl)-2-oxopropyl phosphate + H2O. The protein operates within amino-acid biosynthesis; L-histidine biosynthesis; L-histidine from 5-phospho-alpha-D-ribose 1-diphosphate: step 6/9. The chain is Imidazoleglycerol-phosphate dehydratase from Bacillus pumilus (strain SAFR-032).